Consider the following 276-residue polypeptide: Orotidine 5'-phosphate decarboxylase (276 aa).

Lysine 96 serves as the catalytic Proton donor.

The protein belongs to the OMP decarboxylase family. Type 2 subfamily.

It catalyses the reaction orotidine 5'-phosphate + H(+) = UMP + CO2. It participates in pyrimidine metabolism; UMP biosynthesis via de novo pathway; UMP from orotate: step 2/2. The polypeptide is Orotidine 5'-phosphate decarboxylase (Porphyromonas gingivalis (strain ATCC 33277 / DSM 20709 / CIP 103683 / JCM 12257 / NCTC 11834 / 2561)).